A 142-amino-acid chain; its full sequence is Large ribosomal subunit protein uL13 (142 aa).

This sequence belongs to the universal ribosomal protein uL13 family. Part of the 50S ribosomal subunit.

This protein is one of the early assembly proteins of the 50S ribosomal subunit, although it is not seen to bind rRNA by itself. It is important during the early stages of 50S assembly. The sequence is that of Large ribosomal subunit protein uL13 from Pyrococcus furiosus (strain ATCC 43587 / DSM 3638 / JCM 8422 / Vc1).